Here is a 357-residue protein sequence, read N- to C-terminus: Dihydroflavonol 4-reductase (357 aa).

K49 and Y168 together coordinate NADP(+).

Belongs to the NAD(P)-dependent epimerase/dehydratase family. Dihydroflavonol-4-reductase subfamily.

It carries out the reaction a (2R,3S,4S)-leucoanthocyanidin + NADP(+) = a (2R,3R)-dihydroflavonol + NADPH + H(+). It catalyses the reaction (2S)-flavan-4-ol + NADP(+) = (2S)-flavanone + NADPH + H(+). The protein operates within pigment biosynthesis; anthocyanin biosynthesis. Its function is as follows. Bifunctional enzyme involved in flavonoid metabolism. The chain is Dihydroflavonol 4-reductase (A1) from Zea mays (Maize).